A 340-amino-acid chain; its full sequence is MKKVAIVGIRGYSGLELFRIFYYHPEVEVTKIYATSHYGEKLSEHFPQLEGLTDLTISEFNEEEIMAECDAVFFATSAGVSQKLALTFIDNNFPVIDLSGDFRLADLEIYNKWYKNTNLKNEYLLSGQYNLADIGQAKANYIANPGCYATATLLALYPLVKNKMIDLDSIIVDAKSGLSGAGKGLSDASHFVNVVDNMSMYKINSHQHIPEIAQQLKIWNSNFQALQFSTSLIPVSRGIFVSSYAKVAADFDFETIKNAYEQVYATKNFVRIRRQMPHLSDVIGTNFCDIGLAYNPVTNVLSVVSVIDNLMKGAAGQAVQNFNQLFGYDESLGLKFMPSL.

The active site involves cysteine 147.

This sequence belongs to the NAGSA dehydrogenase family. Type 1 subfamily.

It localises to the cytoplasm. It catalyses the reaction N-acetyl-L-glutamate 5-semialdehyde + phosphate + NADP(+) = N-acetyl-L-glutamyl 5-phosphate + NADPH + H(+). Its pathway is amino-acid biosynthesis; L-arginine biosynthesis; N(2)-acetyl-L-ornithine from L-glutamate: step 3/4. Catalyzes the NADPH-dependent reduction of N-acetyl-5-glutamyl phosphate to yield N-acetyl-L-glutamate 5-semialdehyde. The sequence is that of N-acetyl-gamma-glutamyl-phosphate reductase from Lactococcus lactis subsp. lactis (strain IL1403) (Streptococcus lactis).